Reading from the N-terminus, the 302-residue chain is Ribonuclease HII (302 aa).

An RNase H type-2 domain is found at 53-297 (EFEIGVDEVG…VQQAIEGTLA (245 aa)). A divalent metal cation is bound by residues Asp-59, Glu-60, and Asp-163.

This sequence belongs to the RNase HII family. Mn(2+) is required as a cofactor. Mg(2+) serves as cofactor.

The protein resides in the cytoplasm. It carries out the reaction Endonucleolytic cleavage to 5'-phosphomonoester.. Functionally, endonuclease that specifically degrades the RNA of RNA-DNA hybrids. The polypeptide is Ribonuclease HII (Psychrobacter sp. (strain PRwf-1)).